A 217-amino-acid polypeptide reads, in one-letter code: Probable GTP-binding protein EngB (217 aa).

Positions Gly-29 to Ile-213 constitute an EngB-type G domain. GTP contacts are provided by residues Gly-37 to Ser-44, Gly-64 to Glu-68, Asp-91 to Gly-94, Thr-158 to Asp-161, and Thr-192 to Ser-194. Positions 44 and 66 each coordinate Mg(2+).

The protein belongs to the TRAFAC class TrmE-Era-EngA-EngB-Septin-like GTPase superfamily. EngB GTPase family. Requires Mg(2+) as cofactor.

Functionally, necessary for normal cell division and for the maintenance of normal septation. This Rhizobium etli (strain CIAT 652) protein is Probable GTP-binding protein EngB.